Reading from the N-terminus, the 186-residue chain is MTTTALTTASPSQVRQNYHQDSEAAINRQINLELYASYVYLSMSCYFDRDDVALKNFAKYFLHQSHEEREHAEKLMKLQNQRGGRIFLQDIKKPDRDDWESGLNAMECALHLEKSVNQSLLELHKLATDKNDPHLCDFIETHYLNEQVKSIKELGDHVTNLRKMGAPEAGMAEYLFDKHTLGHSES.

Residues 16-165 (QNYHQDSEAA…DHVTNLRKMG (150 aa)) form the Ferritin-like diiron domain. 5 residues coordinate Fe cation: E33, E68, H71, E113, and Q147. Position 184 is a phosphoserine (S184).

The protein belongs to the ferritin family. In terms of assembly, oligomer of 24 subunits. There are two types of subunits: L (light) chain and H (heavy) chain. The major chain can be light or heavy, depending on the species and tissue type. The functional molecule forms a roughly spherical shell with a diameter of 12 nm and contains a central cavity into which the insoluble mineral iron core is deposited. Interacts with NCOA4; NCOA4 promotes targeting of the iron-binding ferritin complex to autolysosomes following starvation or iron depletion.

It localises to the cytoplasm. Its subcellular location is the lysosome. The protein resides in the cytoplasmic vesicle. The protein localises to the autophagosome. The enzyme catalyses 4 Fe(2+) + O2 + 4 H(+) = 4 Fe(3+) + 2 H2O. Its function is as follows. Stores iron in a soluble, non-toxic, readily available form. Important for iron homeostasis. Has ferroxidase activity. Iron is taken up in the ferrous form and deposited as ferric hydroxides after oxidation. Also plays a role in delivery of iron to cells. Mediates iron uptake in capsule cells of the developing kidney. Delivery to lysosomes is mediated by the cargo receptor NCOA4 for autophagic degradation and release of iron. In Cricetulus griseus (Chinese hamster), this protein is Ferritin heavy chain (FTH1).